Here is a 392-residue protein sequence, read N- to C-terminus: Putative nickel insertion protein (392 aa).

This sequence belongs to the LarC family.

This Pelobacter propionicus (strain DSM 2379 / NBRC 103807 / OttBd1) protein is Putative nickel insertion protein.